A 718-amino-acid chain; its full sequence is Polyribonucleotide nucleotidyltransferase (718 aa).

Mg(2+)-binding residues include Asp-493 and Asp-499. The 60-residue stretch at 560–619 (PRMITIKINPEKIRDVIGKGGSVIRALTEETGTTIDISDDGVVTIASTSSEGMAEAKKRI) folds into the KH domain. An S1 motif domain is found at 629–697 (GQVYEGTVLK…EKGRVRLSAK (69 aa)).

Belongs to the polyribonucleotide nucleotidyltransferase family. Requires Mg(2+) as cofactor.

Its subcellular location is the cytoplasm. The catalysed reaction is RNA(n+1) + phosphate = RNA(n) + a ribonucleoside 5'-diphosphate. In terms of biological role, involved in mRNA degradation. Catalyzes the phosphorolysis of single-stranded polyribonucleotides processively in the 3'- to 5'-direction. In Paraburkholderia phytofirmans (strain DSM 17436 / LMG 22146 / PsJN) (Burkholderia phytofirmans), this protein is Polyribonucleotide nucleotidyltransferase.